Consider the following 346-residue polypeptide: Partitioning defective 6 homolog alpha (346 aa).

The interval 1–116 is interaction with PRKCI and PRKCZ; the sequence is MARPQRTPAR…SNSLQRRKKG (116 aa). Positions 15–95 constitute a PB1 domain; that stretch reads IVEVKSKFDA…PPLRLLVQKR (81 aa). An interaction with PARD3 and CDC42 region spans residues 126–253; the sequence is RTRPPLLISL…VTVKPANQRN (128 aa). One can recognise a Pseudo-CRIB domain in the interval 133–150; the sequence is ISLPQDFRQVSSVIDVDL. The 94-residue stretch at 157–250 folds into the PDZ domain; the sequence is RVRLHKHGSD…NLIVTVKPAN (94 aa). Residues 257–346 are disordered; sequence RGASGRLTGP…IRGDGSGFSL (90 aa). 2 positions are modified to phosphoserine: serine 278 and serine 345.

This sequence belongs to the PAR6 family. In terms of assembly, interacts with MAP2K5. Interacts with PARD3. Interacts with GTP-bound forms of CDC42, RHOQ/TC10 and RAC1. Interacts with the N-terminal part of PRKCI and PRKCZ. Part of a complex with PARD3, CDC42 or RAC1 and PRKCI or PRKCZ. Part of a complex with LLGL1 and PRKCI. Interacts with human T-cell leukemia virus type I TAX protein. Interacts with PALS1 and CRB3. Interacts with TGFBR1; involved in TGF-beta induced epithelial to mesenchymal transition. Interacts with ECT2 ('Thr-359' phosphorylated form) and PRKCI. Interacts with DCTN1 and PCM1. Phosphorylated by the TGF-beta receptor. Post-translationally, ubiquitinated by the SCF(FBXO31) complex, leading to its proteasomal degradation. In terms of tissue distribution, expressed in pancreas, skeletal muscle, brain and heart. Weakly expressed in kidney and placenta.

It is found in the cytoplasm. The protein resides in the cell membrane. It localises to the cell projection. The protein localises to the ruffle. Its subcellular location is the cell junction. It is found in the tight junction. The protein resides in the cytoskeleton. It localises to the microtubule organizing center. The protein localises to the centrosome. Its subcellular location is the centriolar satellite. In terms of biological role, adapter protein involved in asymmetrical cell division and cell polarization processes. Probably involved in the formation of epithelial tight junctions. Association with PARD3 may prevent the interaction of PARD3 with F11R/JAM1, thereby preventing tight junction assembly. The PARD6-PARD3 complex links GTP-bound Rho small GTPases to atypical protein kinase C proteins. Regulates centrosome organization and function. Essential for the centrosomal recruitment of key proteins that control centrosomal microtubule organization. The polypeptide is Partitioning defective 6 homolog alpha (PARD6A) (Homo sapiens (Human)).